A 106-amino-acid chain; its full sequence is MADFLGMMKQAAQLQSKMQEMQAELGNVEVEGISGGGLVAVRMTAKMDVKSIKIDPSLLKPEEAEILEDLLVTAHGDARRKAEAAMQEKMQAITGKLGLPPGFGFG.

It belongs to the YbaB/EbfC family. Homodimer.

It localises to the cytoplasm. It is found in the nucleoid. Functionally, binds to DNA and alters its conformation. May be involved in regulation of gene expression, nucleoid organization and DNA protection. The sequence is that of Nucleoid-associated protein BRADO0764 from Bradyrhizobium sp. (strain ORS 278).